We begin with the raw amino-acid sequence, 582 residues long: Vesicular glutamate transporter 2 (582 aa).

Residues 1-71 are Cytoplasmic-facing; sequence MESVKQRILA…CTCFGLPRRY (71 aa). Residues 72 to 92 form a helical membrane-spanning segment; it reads IIAIMSGLGFCISFGIRCNLG. The Vesicular segment spans residues 93–125; sequence VAIVDMVNNSTIHRGGKVIKEKAKFNWDPETVG. Residues asparagine 100 and asparagine 101 are each glycosylated (N-linked (GlcNAc...) asparagine). A helical membrane pass occupies residues 126-146; sequence MIHGSFFWGYIITQIPGGYIA. At 147–148 the chain is on the cytoplasmic side; the sequence is SR. The chain crosses the membrane as a helical span at residues 149 to 169; that stretch reads LAANRVFGAAILLTSTLNMLI. The Vesicular portion of the chain corresponds to 170-177; the sequence is PSAARVHY. A helical transmembrane segment spans residues 178–198; the sequence is GCVIFVRILQGLVEGVTYPAC. Residues 199 to 216 are Cytoplasmic-facing; sequence HGIWSKWAPPLERSRLAT. The chain crosses the membrane as a helical span at residues 217-237; it reads TSFCGSYAGAVIAMPLAGILV. The Vesicular segment spans residues 238-244; the sequence is QYTGWSS. Residues 245–265 traverse the membrane as a helical segment; sequence VFYVYGSFGMVWYMFWLLVSY. Residues 266–310 are Cytoplasmic-facing; it reads ESPAKHPTITDEERRYIEESIGESANLLGAMEKFKTPWRKFFTSM. The chain crosses the membrane as a helical span at residues 311–331; that stretch reads PVYAIIVANFCRSWTFYLLLI. Residues 332-349 lie on the Vesicular side of the membrane; that stretch reads SQPAYFEEVFGFEISKVG. A helical transmembrane segment spans residues 350 to 370; the sequence is MLSAVPHLVMTIIVPIGGQIA. The Cytoplasmic portion of the chain corresponds to 371-386; sequence DFLRSKQILSTTTVRK. The helical transmembrane segment at 387-407 threads the bilayer; that stretch reads IMNCGGFGMEATLLLVVGYSH. Over 408 to 409 the chain is Vesicular; the sequence is TR. A helical membrane pass occupies residues 410 to 430; sequence GVAISFLVLAVGFSGFAISGF. Topologically, residues 431-443 are cytoplasmic; the sequence is NVNHLDIAPRYAS. A helical membrane pass occupies residues 444–464; the sequence is ILMGISNGVGTLSGMVCPIIV. Topologically, residues 465–477 are vesicular; sequence GAMTKNKSREEWQ. An N-linked (GlcNAc...) asparagine glycan is attached at asparagine 470. Residues 478–498 traverse the membrane as a helical segment; that stretch reads YVFLIAALVHYGGVIFYAIFA. At 499 to 582 the chain is on the cytoplasmic side; the sequence is SGEKQPWADP…HSYKDRVDYS (84 aa).

The protein belongs to the major facilitator superfamily. Sodium/anion cotransporter family. VGLUT subfamily. As to expression, predominantly expressed in adult brain. Expressed in amygdala, caudate nucleus, cerebral cortex, frontal lobe, hippocampus, medulla, occipital lobe, putamen, spinal cord, substantia nigra, subthalamic nucleus, temporal lobe and thalamus.

The protein resides in the cytoplasmic vesicle. It is found in the secretory vesicle. It localises to the synaptic vesicle membrane. Its subcellular location is the synapse. The protein localises to the synaptosome. The protein resides in the cell membrane. The enzyme catalyses L-glutamate(out) = L-glutamate(in). It catalyses the reaction 3 Na(+)(out) + phosphate(out) = 3 Na(+)(in) + phosphate(in). It carries out the reaction phosphate(in) = phosphate(out). The catalysed reaction is K(+)(in) + H(+)(out) = K(+)(out) + H(+)(in). The enzyme catalyses chloride(in) = chloride(out). Its activity is regulated as follows. Chloride channel activity is allosterically activated by lumenal H(+) and Cl(-) leading to synaptic vesicles acidification. The L-glutamate transport activity is allosterically activated by lumenal H(+) and Cl(-). The allosteric requirement for H(+) efficiently prevents non-vesicular efflux across the plasma membrane. The L-glutamate uniporter activity exhibits a biphasic dependence on chloride concentration. In terms of biological role, multifunctional transporter that transports L-glutamate as well as multiple ions such as chloride, proton, potassium, sodium and phosphate. At the synaptic vesicle membrane, mainly functions as a uniporter which transports preferentially L-glutamate but also, phosphate from the cytoplasm into synaptic vesicles at presynaptic nerve terminals of excitatory neural cells. The L-glutamate or phosphate uniporter activity is electrogenic and is driven by the proton electrochemical gradient, mainly by the electrical gradient established by the vacuolar H(+)-ATPase across the synaptic vesicle membrane. In addition, functions as a chloride channel that allows the chloride permeation through the synaptic vesicle membrane therefore affects the proton electrochemical gradient and promotes synaptic vesicles acidification. Moreover, functions as a vesicular K(+)/H(+) antiport allowing to maintain the electrical gradient and to decrease chemical gradient and therefore sustain vesicular glutamate uptake. The vesicular H(+)/H(+) antiport activity is electroneutral. At the plasma membrane, following exocytosis, functions as a symporter of Na(+) and phosphate from the extracellular space to the cytoplasm allowing synaptic phosphate homeostasis regulation. The symporter activity is driven by an inside negative membrane potential and is electrogenic. Also involved in the regulation of retinal hyaloid vessel regression during postnatal development. May also play a role in the endocrine glutamatergic system of other tissues such as pineal gland and pancreas. The chain is Vesicular glutamate transporter 2 from Homo sapiens (Human).